Consider the following 258-residue polypeptide: DNA-directed RNA polymerase subunit Rpo3 (258 aa).

It belongs to the archaeal Rpo3/eukaryotic RPB3 RNA polymerase subunit family. Part of the RNA polymerase complex.

It localises to the cytoplasm. It catalyses the reaction RNA(n) + a ribonucleoside 5'-triphosphate = RNA(n+1) + diphosphate. Its function is as follows. DNA-dependent RNA polymerase (RNAP) catalyzes the transcription of DNA into RNA using the four ribonucleoside triphosphates as substrates. The polypeptide is DNA-directed RNA polymerase subunit Rpo3 (Pyrobaculum calidifontis (strain DSM 21063 / JCM 11548 / VA1)).